Here is a 575-residue protein sequence, read N- to C-terminus: Methionine--tRNA ligase, mitochondrial (575 aa).

Positions 20–32 (PIFYPNAKPHLGH) match the 'HIGH' region motif. The 'KMSKS' region signature appears at 341–345 (KMSKS). ATP is bound at residue Lys344.

This sequence belongs to the class-I aminoacyl-tRNA synthetase family.

The protein resides in the mitochondrion matrix. It carries out the reaction tRNA(Met) + L-methionine + ATP = L-methionyl-tRNA(Met) + AMP + diphosphate. Its function is as follows. Catalyzes the attachment of methionine to tRNA(Met) in the mitochondrion. This Saccharomyces cerevisiae (strain ATCC 204508 / S288c) (Baker's yeast) protein is Methionine--tRNA ligase, mitochondrial (MSM1).